The primary structure comprises 397 residues: Growth-regulating factor 1 (397 aa).

Positions 18–53 (PFTASQWQELEHQALIYKYMASGTPIPSDLILPLRR) constitute a QLQ domain. 2 short sequence motifs (bipartite nuclear localization signal) span residues 86-105 (RKAE…KKWR) and 123-130 (RGKNRSRK). Residues 90–134 (DPEPGRCRRTDGKKWRCSKEAYPDSKYCEKHMHRGKNRSRKPVEM) form the WRC domain. Residues 117–176 (CEKHMHRGKNRSRKPVEMSLATPPPPSSSATSAASNTSAGVAPTTTTTSSPAPSYSRPAP) are disordered. Over residues 120–129 (HMHRGKNRSR) the composition is skewed to basic residues. Low complexity predominate over residues 144–174 (SSATSAASNTSAGVAPTTTTTSSPAPSYSRP).

Belongs to the GRF family.

It is found in the nucleus. In terms of biological role, transcription activator that plays a regulatory role in gibberellin-induced stem elongation. This chain is Growth-regulating factor 1 (GRF1), found in Oryza sativa subsp. japonica (Rice).